The following is a 304-amino-acid chain: Oxygen-dependent coproporphyrinogen-III oxidase (304 aa).

A substrate-binding site is contributed by Ser93. His97 and His107 together coordinate a divalent metal cation. His107 serves as the catalytic Proton donor. 109 to 111 is a binding site for substrate; sequence NVR. Residues His146 and His176 each contribute to the a divalent metal cation site. The segment at 241–276 is important for dimerization; it reads YVEFNLVYDRGTLFGLQSGGRTESILMSLPPQVRWA. Residue 259–261 coordinates substrate; it reads GGR.

This sequence belongs to the aerobic coproporphyrinogen-III oxidase family. In terms of assembly, homodimer. A divalent metal cation serves as cofactor.

The protein resides in the cytoplasm. It catalyses the reaction coproporphyrinogen III + O2 + 2 H(+) = protoporphyrinogen IX + 2 CO2 + 2 H2O. Its pathway is porphyrin-containing compound metabolism; protoporphyrin-IX biosynthesis; protoporphyrinogen-IX from coproporphyrinogen-III (O2 route): step 1/1. Involved in the heme biosynthesis. Catalyzes the aerobic oxidative decarboxylation of propionate groups of rings A and B of coproporphyrinogen-III to yield the vinyl groups in protoporphyrinogen-IX. The protein is Oxygen-dependent coproporphyrinogen-III oxidase of Pseudomonas fluorescens (strain Pf0-1).